Reading from the N-terminus, the 251-residue chain is Developmental protein SEPALLATA 3 (251 aa).

Residues 3-57 (RGRVELKRIENKINRQVTFAKRRNGLLKKAYELSVLCDAEVALIIFSNRGKLYEF) enclose the MADS-box domain. The 91-residue stretch at 91–181 (ELSSQQEYLK…RLRLADGYQM (91 aa)) folds into the K-box domain. Residues 94-177 (SQQEYLKLKE…NKTLRLRLAD (84 aa)) adopt a coiled-coil conformation.

As to quaternary structure, forms homodimers. Heterodimer with AP1 or AG capable of binding to CArG-box sequences. Binds AP3/PI to form a ternary complex. Interacts with AGL16. Interacts with TT16/AGL32.

It localises to the nucleus. Functionally, probable transcription factor active in inflorescence development and floral organogenesis. Functions with SEPALLATA1/AGL2 and SEPALLATA2/AGL4 to ensure proper development of petals, stamens and carpels and to prevent the indeterminate growth of the flower meristem. Interacts with APETALA1, AGAMOUS or APETALA3/PISTILLATA to form complexes, that could be involved in genes regulation during floral meristem development. Binds specifically to the CArG box DNA sequence 5'-CC (A/T)6 GG-3'. The protein is Developmental protein SEPALLATA 3 (SEP3) of Arabidopsis thaliana (Mouse-ear cress).